The sequence spans 549 residues: Cytoplasmic trehalase (549 aa).

Substrate contacts are provided by residues R168, 175 to 176, N212, 221 to 223, 292 to 294, and G324; these read WD, RSQ, and RDE. Residues D326 and E509 each act as proton donor/acceptor in the active site. E525 is a binding site for substrate.

It belongs to the glycosyl hydrolase 37 family. In terms of assembly, monomer.

It localises to the cytoplasm. The catalysed reaction is alpha,alpha-trehalose + H2O = alpha-D-glucose + beta-D-glucose. It participates in glycan degradation; trehalose degradation; D-glucose from alpha,alpha-trehalose: step 1/1. Functionally, hydrolyzes trehalose to glucose. Could be involved, in cells returning to low osmolarity conditions, in the utilization of the accumulated cytoplasmic trehalose, which was synthesized in response to high osmolarity. The chain is Cytoplasmic trehalase from Escherichia coli (strain 55989 / EAEC).